We begin with the raw amino-acid sequence, 454 residues long: Cytochrome b-c1 complex subunit 2, mitochondrial (454 aa).

The N-terminal 35 residues, 1 to 35 (MISRSALSRGSQLALRRPAAAKTAQRGFAAAAASP), are a transit peptide targeting the mitochondrion.

Belongs to the peptidase M16 family. UQCRC2/QCR2 subfamily. In terms of assembly, component of the ubiquinol-cytochrome c oxidoreductase (cytochrome b-c1 complex, complex III, CIII), a multisubunit enzyme composed of 10 subunits. The complex is composed of 3 respiratory subunits cytochrome b (cob), cytochrome c1 (cyt-1) and Rieske protein (fes-1), 2 core protein subunits pep and ucr-1, and 5 low-molecular weight protein subunits qcr6, qcr7, qcr8, qcr9 and probably NCU16844/qcr10. The complex exists as an obligatory dimer and forms supercomplexes (SCs) in the inner mitochondrial membrane with NADH-ubiquinone oxidoreductase (complex I, CI) and cytochrome c oxidase (complex IV, CIV), resulting in different assemblies (supercomplexes SCI(1)III(2), SCIII(2)IV(1) and SCIII(2)IV(2) as well as higher order I(x)III(y)IV(z) megacomplexes).

Its subcellular location is the mitochondrion inner membrane. Functionally, component of the ubiquinol-cytochrome c oxidoreductase, a multisubunit transmembrane complex that is part of the mitochondrial electron transport chain which drives oxidative phosphorylation. The respiratory chain contains 3 multisubunit complexes succinate dehydrogenase (complex II, CII), ubiquinol-cytochrome c oxidoreductase (cytochrome b-c1 complex, complex III, CIII) and cytochrome c oxidase (complex IV, CIV), that cooperate to transfer electrons derived from NADH and succinate to molecular oxygen, creating an electrochemical gradient over the inner membrane that drives transmembrane transport and the ATP synthase. The cytochrome b-c1 complex catalyzes electron transfer from ubiquinol to cytochrome c, linking this redox reaction to translocation of protons across the mitochondrial inner membrane, with protons being carried across the membrane as hydrogens on the quinol. In the process called Q cycle, 2 protons are consumed from the matrix, 4 protons are released into the intermembrane space and 2 electrons are passed to cytochrome c. The protein is Cytochrome b-c1 complex subunit 2, mitochondrial (ucr-1) of Neurospora crassa (strain ATCC 24698 / 74-OR23-1A / CBS 708.71 / DSM 1257 / FGSC 987).